Consider the following 72-residue polypeptide: Phaiodotoxin-2 (72 aa).

In terms of domain architecture, LCN-type CS-alpha/beta spans 1 to 72 (KFIRHKDESF…CFGALESKCA (72 aa)). Cystine bridges form between Cys13–Cys38, Cys23–Cys50, Cys27–Cys52, and Cys63–Cys71.

This sequence belongs to the long (4 C-C) scorpion toxin superfamily. Sodium channel inhibitor family. As to expression, expressed by the venom gland.

The protein resides in the secreted. Its function is as follows. Sodium channel (Nav) specific neurotoxin. This is Phaiodotoxin-2 from Anuroctonus phaiodactylus (Mafia scorpion).